The following is a 544-amino-acid chain: Membrane protein insertase YidC (544 aa).

5 helical membrane passes run 13 to 33, 343 to 363, 409 to 429, 461 to 481, and 506 to 526; these read LSLF…SNIL, WGLS…PLTF, LGGC…YSLV, LYFV…FTQL, and MPIM…IYWI.

The protein belongs to the OXA1/ALB3/YidC family. Type 1 subfamily. As to quaternary structure, interacts with the Sec translocase complex via SecD. Specifically interacts with transmembrane segments of nascent integral membrane proteins during membrane integration.

Its subcellular location is the cell inner membrane. In terms of biological role, required for the insertion and/or proper folding and/or complex formation of integral membrane proteins into the membrane. Involved in integration of membrane proteins that insert both dependently and independently of the Sec translocase complex, as well as at least some lipoproteins. Aids folding of multispanning membrane proteins. This Borreliella burgdorferi (strain ATCC 35210 / DSM 4680 / CIP 102532 / B31) (Borrelia burgdorferi) protein is Membrane protein insertase YidC.